The chain runs to 122 residues: Urease subunit beta (122 aa).

The tract at residues 92–122 (GLRPEYAGELDGRGHEPTAPNYGEKGQGHFE) is disordered.

Belongs to the urease beta subunit family. In terms of assembly, heterotrimer of UreA (gamma), UreB (beta) and UreC (alpha) subunits. Three heterotrimers associate to form the active enzyme.

The protein localises to the cytoplasm. The catalysed reaction is urea + 2 H2O + H(+) = hydrogencarbonate + 2 NH4(+). It participates in nitrogen metabolism; urea degradation; CO(2) and NH(3) from urea (urease route): step 1/1. This chain is Urease subunit beta, found in Saccharopolyspora erythraea (strain ATCC 11635 / DSM 40517 / JCM 4748 / NBRC 13426 / NCIMB 8594 / NRRL 2338).